The following is a 439-amino-acid chain: Homogentisate 1,2-dioxygenase (439 aa).

The active-site Proton acceptor is the His-293. Fe cation-binding residues include His-336 and Glu-342. Residues Tyr-351 and His-372 each contribute to the homogentisate site. A Fe cation-binding site is contributed by His-372.

It belongs to the homogentisate dioxygenase family. As to quaternary structure, hexamer; dimer of trimers. It depends on Fe cation as a cofactor.

The enzyme catalyses homogentisate + O2 = 4-maleylacetoacetate + H(+). The protein operates within amino-acid degradation; L-phenylalanine degradation; acetoacetate and fumarate from L-phenylalanine: step 4/6. Involved in the catabolism of homogentisate (2,5-dihydroxyphenylacetate or 2,5-OH-PhAc), a central intermediate in the degradation of phenylalanine and tyrosine. Catalyzes the oxidative ring cleavage of the aromatic ring of homogentisate to yield maleylacetoacetate. This Cupriavidus pinatubonensis (strain JMP 134 / LMG 1197) (Cupriavidus necator (strain JMP 134)) protein is Homogentisate 1,2-dioxygenase.